Reading from the N-terminus, the 510-residue chain is GMP synthase [glutamine-hydrolyzing] (510 aa).

The region spanning 5-195 (LVLVVDFGGQ…LFNVCNLKGD (191 aa)) is the Glutamine amidotransferase type-1 domain. Residue cysteine 82 is the Nucleophile of the active site. Active-site residues include histidine 169 and glutamate 171. The GMPS ATP-PPase domain occupies 196 to 385 (WSMSSFAEQQ…LGIPHKLVWR (190 aa)). Residue 223 to 229 (SGGVDSS) participates in ATP binding.

Homodimer.

The catalysed reaction is XMP + L-glutamine + ATP + H2O = GMP + L-glutamate + AMP + diphosphate + 2 H(+). It functions in the pathway purine metabolism; GMP biosynthesis; GMP from XMP (L-Gln route): step 1/1. Its function is as follows. Catalyzes the synthesis of GMP from XMP. This Clostridium botulinum (strain ATCC 19397 / Type A) protein is GMP synthase [glutamine-hydrolyzing].